The following is an 859-amino-acid chain: Catenin delta-1 (859 aa).

Residues 15–44 (SVRAQEAQFELLSRALEEERRHVTAQLDRV) are a coiled coil. The segment at 226–254 (IDGPDYATTGRRGANGGDPRRRLRSYEDP) is disordered. Residues 243 to 254 (DPRRRLRSYEDP) are compositionally biased toward basic and acidic residues. ARM repeat units lie at residues 279–317 (APNS…HLSY), 320–359 (EDVK…NLSY), 363–401 (RENK…VTGT), 402–446 (LWNL…RVEG), 464–503 (LRNI…LVDS), 513–552 (LRNI…VRRG), 574–614 (AQGY…NLCA), 621–660 (RCIR…NLCG), 661–700 (DNRN…CVIN), and 701–746 (TIHE…GFCL).

Belongs to the beta-catenin family. Interacts with C-cadherin and with zbtb33. Ubiquitously expressed.

The protein localises to the cell junction. It localises to the adherens junction. The protein resides in the cytoplasm. Its subcellular location is the nucleus. It is found in the cell membrane. Key regulator of cell-cell adhesion that associates with and regulates the cell adhesion properties of both C-, E- and N-cadherins, being critical for their surface stability. Beside cell-cell adhesion, regulates gene transcription through several transcription factors including ZBTB33/Kaiso2 and GLIS2, and the activity of Rho family GTPases and downstream cytoskeletal dynamics. Implicated both in cell transformation by SRC and in ligand-induced receptor signaling through the EGF, PDGF, CSF-1 and ERBB2 receptors. Required for gastrulation, axial elongation and development of the craniofacial skeleton and eye. The polypeptide is Catenin delta-1 (ctnnd1) (Xenopus laevis (African clawed frog)).